A 354-amino-acid chain; its full sequence is UDP-N-acetylglucosamine--N-acetylmuramyl-(pentapeptide) pyrophosphoryl-undecaprenol N-acetylglucosamine transferase (354 aa).

Residues 13–15 (SGG), asparagine 125, serine 189, isoleucine 242, 261–266 (ALTVSE), and glutamine 286 contribute to the UDP-N-acetyl-alpha-D-glucosamine site.

This sequence belongs to the glycosyltransferase 28 family. MurG subfamily.

It localises to the cell inner membrane. It carries out the reaction di-trans,octa-cis-undecaprenyl diphospho-N-acetyl-alpha-D-muramoyl-L-alanyl-D-glutamyl-meso-2,6-diaminopimeloyl-D-alanyl-D-alanine + UDP-N-acetyl-alpha-D-glucosamine = di-trans,octa-cis-undecaprenyl diphospho-[N-acetyl-alpha-D-glucosaminyl-(1-&gt;4)]-N-acetyl-alpha-D-muramoyl-L-alanyl-D-glutamyl-meso-2,6-diaminopimeloyl-D-alanyl-D-alanine + UDP + H(+). It functions in the pathway cell wall biogenesis; peptidoglycan biosynthesis. Functionally, cell wall formation. Catalyzes the transfer of a GlcNAc subunit on undecaprenyl-pyrophosphoryl-MurNAc-pentapeptide (lipid intermediate I) to form undecaprenyl-pyrophosphoryl-MurNAc-(pentapeptide)GlcNAc (lipid intermediate II). The polypeptide is UDP-N-acetylglucosamine--N-acetylmuramyl-(pentapeptide) pyrophosphoryl-undecaprenol N-acetylglucosamine transferase (Buchnera aphidicola subsp. Acyrthosiphon pisum (strain 5A)).